Consider the following 123-residue polypeptide: UPF0102 protein VFMJ11_2324 (123 aa).

This sequence belongs to the UPF0102 family.

The chain is UPF0102 protein VFMJ11_2324 from Aliivibrio fischeri (strain MJ11) (Vibrio fischeri).